The primary structure comprises 284 residues: uncharacterized protein (284 aa).

The protein to E.coli YnjA.

This is an uncharacterized protein from Mycobacterium tuberculosis (strain CDC 1551 / Oshkosh).